We begin with the raw amino-acid sequence, 161 residues long: Ribosome maturation factor RimP (161 aa).

Belongs to the RimP family.

The protein localises to the cytoplasm. Its function is as follows. Required for maturation of 30S ribosomal subunits. The polypeptide is Ribosome maturation factor RimP (Pelobacter propionicus (strain DSM 2379 / NBRC 103807 / OttBd1)).